We begin with the raw amino-acid sequence, 222 residues long: Putative thymidylate synthase (222 aa).

The active site involves cysteine 146.

This sequence belongs to the thymidylate synthase family. Archaeal-type ThyA subfamily. Monomer.

It localises to the cytoplasm. It participates in pyrimidine metabolism; dTTP biosynthesis. In terms of biological role, may catalyze the biosynthesis of dTMP using an unknown cosubstrate. The sequence is that of Putative thymidylate synthase from Methanothermobacter thermautotrophicus (strain ATCC 29096 / DSM 1053 / JCM 10044 / NBRC 100330 / Delta H) (Methanobacterium thermoautotrophicum).